Consider the following 1034-residue polypeptide: Glycine dehydrogenase (decarboxylating), mitochondrial (1034 aa).

The transit peptide at 1–63 directs the protein to the mitochondrion; sequence MERARRLAML…LNGFGSQVRT (63 aa). Position 770 is an N6-(pyridoxal phosphate)lysine (Lys770).

Belongs to the GcvP family. Homodimer. The glycine cleavage system is composed of four proteins: P, T, L and H. It depends on pyridoxal 5'-phosphate as a cofactor.

The protein localises to the mitochondrion. The catalysed reaction is N(6)-[(R)-lipoyl]-L-lysyl-[glycine-cleavage complex H protein] + glycine + H(+) = N(6)-[(R)-S(8)-aminomethyldihydrolipoyl]-L-lysyl-[glycine-cleavage complex H protein] + CO2. In terms of biological role, the glycine cleavage system catalyzes the degradation of glycine. The P protein binds the alpha-amino group of glycine through its pyridoxal phosphate cofactor; CO(2) is released and the remaining methylamine moiety is then transferred to the lipoamide cofactor of the H protein. The chain is Glycine dehydrogenase (decarboxylating), mitochondrial (GDCSP) from Flaveria anomala (Yellowtops).